A 343-amino-acid chain; its full sequence is C-X-C chemokine receptor type 6 (343 aa).

The Extracellular portion of the chain corresponds to M1–V33. A glycan (N-linked (GlcNAc...) asparagine) is linked at N17. Residues F34–Y60 traverse the membrane as a helical segment. Residues H61 to V69 are Cytoplasmic-facing. The helical transmembrane segment at F70–Y90 threads the bilayer. Residues A91–K104 lie on the Extracellular side of the membrane. A disulfide bond links C103 and C181. A helical membrane pass occupies residues T105–V126. At D127 to K144 the chain is on the cytoplasmic side. The chain crosses the membrane as a helical span at residues R145–L165. At P166–I188 the chain is on the extracellular side. The chain crosses the membrane as a helical span at residues S189–I216. The Cytoplasmic portion of the chain corresponds to K217 to K232. A helical transmembrane segment spans residues I233–E260. At Y261 to A276 the chain is on the extracellular side. A helical transmembrane segment spans residues I277–L294. Residues K295–L343 are Cytoplasmic-facing.

Belongs to the G-protein coupled receptor 1 family.

Its subcellular location is the cell membrane. In terms of biological role, receptor for the C-X-C chemokine CXCL16. Used as a coreceptor by SIVs and by strains of HIV-2 and m-tropic HIV-1. This chain is C-X-C chemokine receptor type 6 (CXCR6), found in Macaca fascicularis (Crab-eating macaque).